A 33-amino-acid chain; its full sequence is Protamine-1B (33 aa).

Residues 1–33 (PRRRRRRSSSRPIRRRRPRRVSRRRRRGGRRRR) form a disordered region.

In terms of tissue distribution, testis.

Its subcellular location is the nucleus. The protein resides in the chromosome. Functionally, protamines substitute for histones in the chromatin of sperm during the haploid phase of spermatogenesis. They compact sperm DNA into a highly condensed, stable and inactive complex. In Oncorhynchus mykiss (Rainbow trout), this protein is Protamine-1B.